The following is a 231-amino-acid chain: Flagellar L-ring protein (231 aa).

An N-terminal signal peptide occupies residues 1–18; it reads MNRLLSVFALGGAVLLAG. A lipid anchor (N-palmitoyl cysteine) is attached at C19. The S-diacylglycerol cysteine moiety is linked to residue C19.

Belongs to the FlgH family. As to quaternary structure, the basal body constitutes a major portion of the flagellar organelle and consists of four rings (L,P,S, and M) mounted on a central rod.

It localises to the cell outer membrane. The protein resides in the bacterial flagellum basal body. Assembles around the rod to form the L-ring and probably protects the motor/basal body from shearing forces during rotation. This chain is Flagellar L-ring protein, found in Pseudomonas putida (strain ATCC 700007 / DSM 6899 / JCM 31910 / BCRC 17059 / LMG 24140 / F1).